A 177-amino-acid polypeptide reads, in one-letter code: R-phycoerythrin beta chain (177 aa).

Residues cysteine 50 and cysteine 61 each contribute to the phycourobilin site. Asparagine 72 bears the N4-methylasparagine mark. (2R,3E)-phycoerythrobilin-binding residues include cysteine 82 and cysteine 158.

The protein belongs to the phycobiliprotein family. In terms of assembly, heterodimer of an alpha and a beta chain. Contains two covalently linked phycoerythrobilin chromophores and one covalently linked phycourobilin chromophore.

The protein resides in the plastid. Its subcellular location is the chloroplast thylakoid membrane. Functionally, light-harvesting photosynthetic bile pigment-protein from the phycobiliprotein complex. This is R-phycoerythrin beta chain (cpeB) from Pyropia yezoensis (Susabi-nori).